The chain runs to 634 residues: Threonine--tRNA ligase (634 aa).

A TGS domain is found at 1 to 61 (MINIRFPDGS…NSNCELRLIT (61 aa)). Residues 241 to 532 (DHRKIGKVLD…LIEHYAGNLP (292 aa)) are catalytic. Zn(2+) contacts are provided by cysteine 332, histidine 383, and histidine 509.

Belongs to the class-II aminoacyl-tRNA synthetase family. As to quaternary structure, homodimer. Requires Zn(2+) as cofactor.

It localises to the cytoplasm. It carries out the reaction tRNA(Thr) + L-threonine + ATP = L-threonyl-tRNA(Thr) + AMP + diphosphate + H(+). In terms of biological role, catalyzes the attachment of threonine to tRNA(Thr) in a two-step reaction: L-threonine is first activated by ATP to form Thr-AMP and then transferred to the acceptor end of tRNA(Thr). Also edits incorrectly charged L-seryl-tRNA(Thr). The polypeptide is Threonine--tRNA ligase (Francisella tularensis subsp. mediasiatica (strain FSC147)).